The primary structure comprises 181 residues: Probable RNA 2'-phosphotransferase (181 aa).

Belongs to the KptA/TPT1 family.

Removes the 2'-phosphate from RNA via an intermediate in which the phosphate is ADP-ribosylated by NAD followed by a presumed transesterification to release the RNA and generate ADP-ribose 1''-2''-cyclic phosphate (APPR&gt;P). May function as an ADP-ribosylase. This chain is Probable RNA 2'-phosphotransferase, found in Acaryochloris marina (strain MBIC 11017).